Consider the following 441-residue polypeptide: Membrane protein PB1A10.07c (441 aa).

Transmembrane regions (helical) follow at residues 1-21 (MGAVLSIPLALASSLSGVVGI), 41-61 (VGAVISYAVLYFVNSLLSWCM), 97-117 (LSFTLVMFHLFLAFILSLCNT), 128-148 (GLWPFKIVLWFVLGIFSFFIP), 158-178 (IISVMGSALFIVYGLMLLVDF), 206-226 (TVGMYVVGLVLTILTYVFFCA), 235-255 (INTINLLLCIAVSCLSVHPTI), 263-283 (GLAQSSMVMCYTCYLILSALA), 307-327 (VIGAAFTFFTILYSAVRAASS), 364-384 (YNFIWFHIVFVLAAFYTASLL), and 415-435 (IITSWVCHGLYVWSCLAPVFF).

Belongs to the TDE1 family.

Its subcellular location is the membrane. In Schizosaccharomyces pombe (strain 972 / ATCC 24843) (Fission yeast), this protein is Membrane protein PB1A10.07c.